We begin with the raw amino-acid sequence, 151 residues long: MKVVLLKDVAKIGKKGEVKNVSDGYARNFLIPKGLALEATPAVMKQLKAQKMKEEEEKKKIKQESEELLKLLQKHLYKIPVKTGGSGKLFGALTNADIAKAISEKTGKDIDKKHIVLNKPIKELGLYEITVKLPEGITGKIKVEVVQEGKN.

Belongs to the bacterial ribosomal protein bL9 family.

Functionally, binds to the 23S rRNA. The protein is Large ribosomal subunit protein bL9 of Thermosipho africanus (strain TCF52B).